The primary structure comprises 60 residues: Potassium channel toxin ImKTx88 (60 aa).

Residues 1-22 (MSNFSVFLIALLFCSVFILSEA) form the signal peptide. Disulfide bonds link C30/C51, C36/C56, and C40/C58.

The protein belongs to the short scorpion toxin superfamily. Potassium channel inhibitor family. In terms of tissue distribution, expressed by the venom gland.

It localises to the secreted. Its function is as follows. Recombinant toxin selectively inhibits Kv1.3/KCNA3 potassium channels with an IC(50) of 91 pM. The polypeptide is Potassium channel toxin ImKTx88 (Isometrus maculatus (Lesser brown scorpion)).